Reading from the N-terminus, the 171-residue chain is Large ribosomal subunit protein bL9 (171 aa).

It belongs to the bacterial ribosomal protein bL9 family.

Binds to the 23S rRNA. This Rickettsia canadensis (strain McKiel) protein is Large ribosomal subunit protein bL9.